A 198-amino-acid polypeptide reads, in one-letter code: MKRIGVFGGAFDPPHVAHAALVKAALAELQLDELRVVPTGEAWHKTRTLSPAPHRLAMAQLAFAELPHVVVDPRELERVGPSYTVDTLREFKALWPTAEFFLILGEDQAQALPSWHDWQEILQLAIICVATRACSTGAGAKFDLETTHKSRFRRLLMPALNVSATDIRARFAAHLSVADMVFEPVARYIAHHHLYQTA.

This sequence belongs to the NadD family.

It catalyses the reaction nicotinate beta-D-ribonucleotide + ATP + H(+) = deamido-NAD(+) + diphosphate. It participates in cofactor biosynthesis; NAD(+) biosynthesis; deamido-NAD(+) from nicotinate D-ribonucleotide: step 1/1. Functionally, catalyzes the reversible adenylation of nicotinate mononucleotide (NaMN) to nicotinic acid adenine dinucleotide (NaAD). The chain is Probable nicotinate-nucleotide adenylyltransferase from Albidiferax ferrireducens (strain ATCC BAA-621 / DSM 15236 / T118) (Rhodoferax ferrireducens).